The sequence spans 5058 residues: ATP-binding cassette sub-family A member 13 (5058 aa).

A run of 7 helical transmembrane segments spans residues P23–L43, V3568–V3588, G3607–I3627, F3648–L3668, A3679–L3699, T3709–L3729, and F3752–Y3772. One can recognise an ABC transporter 1 domain in the interval V3842–T4074. An ATP-binding site is contributed by G3875–T3882. Transmembrane regions (helical) follow at residues T4226–V4246, V4458–V4478, F4504–A4524, L4536–L4556, F4568–M4588, V4607–L4627, and M4651–L4671. Residues L4718–W4956 enclose the ABC transporter 2 domain. ATP is bound at residue G4754–S4761.

This sequence belongs to the ABC transporter superfamily. In terms of tissue distribution, significantly expressed in the bone marrow, trachea, testis, thyroid and lung as well as in skin fibroblasts.

Its subcellular location is the cytoplasmic vesicle membrane. It carries out the reaction cholesterol(in) + ATP + H2O = cholesterol(out) + ADP + phosphate + H(+). In terms of biological role, may mediate the cholesterol and gangliosides transport from the plasma membrane to intracellular vesicles in an ATP hydrolysis dependent manner, thus playing a role in their internalization by endocytic retrograde transport and may also participate in the endocytosis of synaptic vesicle in cortical neurons. The sequence is that of ATP-binding cassette sub-family A member 13 from Homo sapiens (Human).